We begin with the raw amino-acid sequence, 691 residues long: DNA ligase (691 aa).

NAD(+) is bound by residues 41–45 (DAEYD), 90–91 (SL), and Glu-130. Lys-132 acts as the N6-AMP-lysine intermediate in catalysis. NAD(+) is bound by residues Arg-153, Glu-190, Lys-307, and Lys-331. Residues Cys-425, Cys-428, Cys-443, and Cys-449 each coordinate Zn(2+). Positions 610–691 (APQGVLAGKT…MHKLLEGHAR (82 aa)) constitute a BRCT domain.

The protein belongs to the NAD-dependent DNA ligase family. LigA subfamily. Mg(2+) serves as cofactor. Mn(2+) is required as a cofactor.

The catalysed reaction is NAD(+) + (deoxyribonucleotide)n-3'-hydroxyl + 5'-phospho-(deoxyribonucleotide)m = (deoxyribonucleotide)n+m + AMP + beta-nicotinamide D-nucleotide.. Functionally, DNA ligase that catalyzes the formation of phosphodiester linkages between 5'-phosphoryl and 3'-hydroxyl groups in double-stranded DNA using NAD as a coenzyme and as the energy source for the reaction. It is essential for DNA replication and repair of damaged DNA. This Burkholderia thailandensis (strain ATCC 700388 / DSM 13276 / CCUG 48851 / CIP 106301 / E264) protein is DNA ligase.